The following is a 314-amino-acid chain: GMP synthase [glutamine-hydrolyzing] subunit B (314 aa).

The GMPS ATP-PPase domain occupies 2–186 (FDPKKFVEEA…LGIPDEIVER (185 aa)). Residue 29–35 (SGGVDST) coordinates ATP.

As to quaternary structure, heterodimer composed of a glutamine amidotransferase subunit (A) and a GMP-binding subunit (B).

The catalysed reaction is XMP + L-glutamine + ATP + H2O = GMP + L-glutamate + AMP + diphosphate + 2 H(+). It functions in the pathway purine metabolism; GMP biosynthesis; GMP from XMP (L-Gln route): step 1/1. Catalyzes the synthesis of GMP from XMP. This Methanopyrus kandleri (strain AV19 / DSM 6324 / JCM 9639 / NBRC 100938) protein is GMP synthase [glutamine-hydrolyzing] subunit B (guaAB).